We begin with the raw amino-acid sequence, 201 residues long: MAKASFILLGTLFLFGAIASIQAKEDLKEVTHKVYFDVEIDGKSAGRVVIGLFGKAVPKTAENFRALCTGEKGVGKSGKPLHYKGSKFHRIIPSFMIQGGDFTHGNGMGGESIYGQKFADENFKLKHTGPGVLSMANSGEDTNGSQFFITTVTTSWLDGRHVVFGKVVQGMDVVYKIEAEGKQSGTPKSKVVIADSGELPL.

Residues 1 to 23 (MAKASFILLGTLFLFGAIASIQA) form the signal peptide. The PPIase cyclophilin-type domain maps to 35 to 198 (YFDVEIDGKS…SKVVIADSGE (164 aa)).

This sequence belongs to the cyclophilin-type PPIase family. Interacts with EMB30/GNOM. In terms of tissue distribution, ubiquitous, mostly in aerial organs (at protein level).

It localises to the cytoplasm. It is found in the membrane. The protein localises to the endoplasmic reticulum. The protein resides in the secreted. The enzyme catalyses [protein]-peptidylproline (omega=180) = [protein]-peptidylproline (omega=0). With respect to regulation, binds cyclosporin A (CsA). CsA mediates some of its effects via an inhibitory action on PPIase. Its function is as follows. PPIases accelerate the folding of proteins. It catalyzes the cis-trans isomerization of proline imidic peptide bonds in oligopeptides. May be involved during embryogenesis and organ development by regulating the folding of EMB30/GNOM, and thus, by modulating its activity. The sequence is that of Peptidyl-prolyl cis-trans isomerase CYP19-4 (CYP19-4) from Arabidopsis thaliana (Mouse-ear cress).